The sequence spans 232 residues: 5'-methylthioadenosine/S-adenosylhomocysteine nucleosidase (232 aa).

Glu12 (proton acceptor) is an active-site residue. Residues Gly78, Ile152, and Met173–Glu174 each bind substrate. The active-site Proton donor is Asp197.

Belongs to the PNP/UDP phosphorylase family. MtnN subfamily. Homodimer.

It catalyses the reaction S-adenosyl-L-homocysteine + H2O = S-(5-deoxy-D-ribos-5-yl)-L-homocysteine + adenine. The enzyme catalyses S-methyl-5'-thioadenosine + H2O = 5-(methylsulfanyl)-D-ribose + adenine. It carries out the reaction 5'-deoxyadenosine + H2O = 5-deoxy-D-ribose + adenine. Its pathway is amino-acid biosynthesis; L-methionine biosynthesis via salvage pathway; S-methyl-5-thio-alpha-D-ribose 1-phosphate from S-methyl-5'-thioadenosine (hydrolase route): step 1/2. Its function is as follows. Catalyzes the irreversible cleavage of the glycosidic bond in both 5'-methylthioadenosine (MTA) and S-adenosylhomocysteine (SAH/AdoHcy) to adenine and the corresponding thioribose, 5'-methylthioribose and S-ribosylhomocysteine, respectively. Also cleaves 5'-deoxyadenosine, a toxic by-product of radical S-adenosylmethionine (SAM) enzymes, into 5-deoxyribose and adenine. Thus, is required for in vivo function of the radical SAM enzymes biotin synthase and lipoic acid synthase, that are inhibited by 5'-deoxyadenosine accumulation. This Salmonella paratyphi A (strain ATCC 9150 / SARB42) protein is 5'-methylthioadenosine/S-adenosylhomocysteine nucleosidase.